Consider the following 778-residue polypeptide: Tastin (778 aa).

The segment covering 1 to 11 has biased composition (basic and acidic residues); the sequence is MTTRQATKDPL. The disordered stretch occupies residues 1–115; it reads MTTRQATKDP…PGPPAQTEAP (115 aa). Ser16, Ser98, and Ser170 each carry phosphoserine. Residues 212 to 244 are disordered; sequence ISPSGPSFHPSTRPSFQELRRETAGSSRTSVSQ. The segment covering 235–244 has biased composition (polar residues); it reads AGSSRTSVSQ. Phosphoserine is present on residues Ser324, Ser334, Ser344, and Ser362. Position 363 is a phosphothreonine (Thr363). Position 376 is a phosphoserine (Ser376). 3 disordered regions span residues 406–425, 508–587, and 600–641; these read EGSG…NRTP, ECGE…AEPR, and PESS…RVEL. The segment covering 513 to 523 has biased composition (pro residues); that stretch reads QPCPPAEPGPP. Tandem repeats lie at residues 516-548, 549-581, 582-614, and 615-647. Positions 516 to 647 are 4 X 33 AA approximate tandem repeats; the sequence is PPAEPGPPEA…RVELGASEPC (132 aa). A compositionally biased stretch (basic and acidic residues) spans 560–574; sequence CRSEPEIPESSRQEQ. Residues 612–622 show a composition bias toward pro residues; it reads EPCPPAEPGPL.

In terms of assembly, directly binds bystin, and indirectly trophinin. In terms of tissue distribution, strong expression at implantation sites. Was exclusively localized to the apical side of the syncytiotrophoblast. Also found in macrophages.

It localises to the cytoplasm. Could be involved with bystin and trophinin in a cell adhesion molecule complex that mediates an initial attachment of the blastocyst to uterine epithelial cells at the time of the embryo implantation. This chain is Tastin (TROAP), found in Homo sapiens (Human).